The sequence spans 589 residues: Arginine--tRNA ligase (589 aa).

The 'HIGH' region signature appears at 131–141 (ANPTGPLHVGH).

The protein belongs to the class-I aminoacyl-tRNA synthetase family. In terms of assembly, monomer.

Its subcellular location is the cytoplasm. The catalysed reaction is tRNA(Arg) + L-arginine + ATP = L-arginyl-tRNA(Arg) + AMP + diphosphate. The sequence is that of Arginine--tRNA ligase from Legionella pneumophila (strain Paris).